Here is a 227-residue protein sequence, read N- to C-terminus: Exodeoxyribonuclease (227 aa).

It catalyses the reaction Exonucleolytic cleavage in the 3'- to 5'-direction to yield nucleoside 5'-phosphates.. Its function is as follows. 3'-5' exonuclease that preferentially uses ssDNA as substrate. Plays a role in group I intron homing. May play a role in the final step of host DNA degradation, by scavenging DNA into mononucleotides. In Escherichia coli (Bacteriophage T4), this protein is Exodeoxyribonuclease (dexA).